The primary structure comprises 113 residues: MSEVNVPLSFSDAAAKRVKALIAEEENPSLMLRVYITGGGCSGFQYGFTFDETVNEGDTKIENSGVILVVDPMSLQYLIGGVVDYTEGLEGSRFFVNNPNATTTCGCGASFSV.

Iron-sulfur cluster-binding residues include cysteine 41, cysteine 105, and cysteine 107.

Belongs to the HesB/IscA family. Homodimer. It depends on iron-sulfur cluster as a cofactor.

Functionally, required for insertion of 4Fe-4S clusters for at least IspG. The sequence is that of Iron-sulfur cluster insertion protein ErpA from Vibrio cholerae serotype O1 (strain ATCC 39541 / Classical Ogawa 395 / O395).